The primary structure comprises 253 residues: uncharacterized protein (253 aa).

The signal sequence occupies residues M1–G19. C20 is lipidated: N-palmitoyl cysteine. A lipid anchor (S-diacylglycerol cysteine) is attached at C20.

Belongs to the staphylococcal tandem lipoprotein family.

Its subcellular location is the cell membrane. This is an uncharacterized protein from Staphylococcus epidermidis (strain ATCC 35984 / DSM 28319 / BCRC 17069 / CCUG 31568 / BM 3577 / RP62A).